Consider the following 178-residue polypeptide: Large ribosomal subunit protein uL6 (178 aa).

This sequence belongs to the universal ribosomal protein uL6 family. As to quaternary structure, part of the 50S ribosomal subunit.

Functionally, this protein binds to the 23S rRNA, and is important in its secondary structure. It is located near the subunit interface in the base of the L7/L12 stalk, and near the tRNA binding site of the peptidyltransferase center. This is Large ribosomal subunit protein uL6 from Campylobacter jejuni subsp. jejuni serotype O:2 (strain ATCC 700819 / NCTC 11168).